The following is a 271-amino-acid chain: MANYTAADVKRLRELTGAGMMDSKNALVEAEGDFDKAVELLRIKGAKDVGKRAERATAEGLVAAKDGALIELNSETDFVAKNAEFQAVAEQIVAAAAAAKATDVDALKAAKLGDTTVEQTIADLSAKIGEKLELRRATYFDGQVETYLHKRAADLPPAVGVLVEYTGDDKSAAHAVALQIAALKAKYLTREDVPEDIVANERRIAEETARAEGKPEQALTKIVEGRVTGFYKDVVLLDQPSVSDNKKSVKALLDEAGVTVTRFARFEVGQA.

Positions 76-79 (TDFV) are involved in Mg(2+) ion dislocation from EF-Tu.

The protein belongs to the EF-Ts family.

The protein localises to the cytoplasm. Functionally, associates with the EF-Tu.GDP complex and induces the exchange of GDP to GTP. It remains bound to the aminoacyl-tRNA.EF-Tu.GTP complex up to the GTP hydrolysis stage on the ribosome. The polypeptide is Elongation factor Ts (Mycolicibacterium gilvum (strain PYR-GCK) (Mycobacterium gilvum (strain PYR-GCK))).